The following is a 268-amino-acid chain: Undecaprenyl-diphosphatase (268 aa).

The next 8 membrane-spanning stretches (helical) occupy residues 9 to 29, 47 to 67, 83 to 103, 107 to 127, 144 to 164, 184 to 204, 218 to 238, and 246 to 266; these read VILGVVEGVTEFLPVSSTGHL, FDVLIQLGAILAILALYFAKL, FIIGVLVAFLPAAVIGAAAGS, LFLFNPWVVCFSLIVGGAVLL, FPVLMYFYIGCAQCVAMIPGV, AAEFSFFLAIPTMVGAFVYDL, IVAVGFVVSFITAIIVVKTFL, and FQLFAWWRVVVGTLGLIALAM.

The protein belongs to the UppP family.

Its subcellular location is the cell inner membrane. It catalyses the reaction di-trans,octa-cis-undecaprenyl diphosphate + H2O = di-trans,octa-cis-undecaprenyl phosphate + phosphate + H(+). Its function is as follows. Catalyzes the dephosphorylation of undecaprenyl diphosphate (UPP). Confers resistance to bacitracin. The chain is Undecaprenyl-diphosphatase from Rhodopseudomonas palustris (strain HaA2).